A 673-amino-acid chain; its full sequence is Protein kinase ORF74 (673 aa).

The Protein kinase domain maps to 128-404; the sequence is TDTDEAVARG…ARELLVYPRY (277 aa). Aspartate 252 acts as the Proton acceptor in catalysis. The interval 340–364 is disordered; the sequence is MDNDALDSRRTGRDGDPVNPEGFGT. A compositionally biased stretch (basic and acidic residues) spans 345–355; sequence LDSRRTGRDGD.

The protein belongs to the protein kinase superfamily. Ser/Thr protein kinase family.

It carries out the reaction L-seryl-[protein] + ATP = O-phospho-L-seryl-[protein] + ADP + H(+). It catalyses the reaction L-threonyl-[protein] + ATP = O-phospho-L-threonyl-[protein] + ADP + H(+). This chain is Protein kinase ORF74 (ORF74), found in Ictalurid herpesvirus 1 (strain Auburn) (IcHV-1).